The primary structure comprises 178 residues: ATP-dependent protease subunit HslV (178 aa).

The active site involves Thr7. Gly162, Cys165, and Thr168 together coordinate Na(+).

It belongs to the peptidase T1B family. HslV subfamily. In terms of assembly, a double ring-shaped homohexamer of HslV is capped on each side by a ring-shaped HslU homohexamer. The assembly of the HslU/HslV complex is dependent on binding of ATP.

Its subcellular location is the cytoplasm. The catalysed reaction is ATP-dependent cleavage of peptide bonds with broad specificity.. Allosterically activated by HslU binding. In terms of biological role, protease subunit of a proteasome-like degradation complex believed to be a general protein degrading machinery. This is ATP-dependent protease subunit HslV from Paraburkholderia xenovorans (strain LB400).